The sequence spans 196 residues: dCTP deaminase (196 aa).

DCTP is bound by residues 113 to 118, Asp-131, 139 to 141, Tyr-174, Lys-181, and Gln-185; these read RSSLAR and VLE. Glu-141 (proton donor/acceptor) is an active-site residue.

The protein belongs to the dCTP deaminase family. Homotrimer.

The catalysed reaction is dCTP + H2O + H(+) = dUTP + NH4(+). It functions in the pathway pyrimidine metabolism; dUMP biosynthesis; dUMP from dCTP (dUTP route): step 1/2. Catalyzes the deamination of dCTP to dUTP. The protein is dCTP deaminase of Wigglesworthia glossinidia brevipalpis.